We begin with the raw amino-acid sequence, 411 residues long: Putative nickel insertion protein (411 aa).

It belongs to the LarC family.

The protein is Putative nickel insertion protein of Methanothermobacter thermautotrophicus (strain ATCC 29096 / DSM 1053 / JCM 10044 / NBRC 100330 / Delta H) (Methanobacterium thermoautotrophicum).